The primary structure comprises 855 residues: Envelope glycoprotein gp150 (855 aa).

Topologically, residues 1–784 are extracellular; the sequence is MAEGFAVNRQ…WLGNIPRYLK (784 aa). Residues Asn-220, Asn-258, Asn-269, Asn-274, Asn-298, Asn-330, Asn-336, Asn-342, Asn-418, Asn-422, Asn-448, Asn-469, Asn-481, Asn-499, Asn-518, Asn-531, and Asn-548 are each glycosylated (N-linked (GlcNAc...) asparagine; by host). Residues 615 to 635 form a fusion peptide region; sequence VMLALATVLSMAGAGTGATAI. Positions 642 to 692 form a coiled coil; the sequence is HQVLATHQETIEKITEALKVNNLRLVTLEHQVLVIGLKVEAIEKFLYTAFA. An immunosuppression region spans residues 661–679; the sequence is VNNLRLVTLEHQVLVIGLK. N-linked (GlcNAc...) asparagine; by host glycosylation is found at Asn-716, Asn-720, and Asn-736. Positions 735 to 771 form a coiled coil; it reads YNQTKDLQQKFYEIIMDMEQNNVQGRKGLQQLQEWED. Residues 785-805 traverse the membrane as a helical segment; the sequence is GLLGGILGIGLGVLLLILCLP. At 806–855 the chain is on the cytoplasmic side; that stretch reads TLVDCIRNCISKVLGYTVIAMPEVEEEEIQPPMELRRNGRQCDMSEKEEE. Residues 835–855 are disordered; the sequence is QPPMELRRNGRQCDMSEKEEE.

As to quaternary structure, the mature envelope protein (Env) consists of a trimer of SU-TM heterodimers attached by noncovalent interactions or by a labile interchain disulfide bond. In terms of processing, specific enzymatic cleavages in vivo yield mature proteins. Envelope glycoproteins are synthesized as an inactive precursor that is N-glycosylated and processed likely by host cell furin or by a furin-like protease in the Golgi to yield the mature SU and TM proteins. The cleavage site between SU and TM requires the minimal sequence [KR]-X-[KR]-R.

Its subcellular location is the virion membrane. It is found in the host cell membrane. Its function is as follows. The surface protein (SU) attaches the virus to the host cell by binding to its receptor. This interaction triggers the refolding of the transmembrane protein (TM) and is thought to activate its fusogenic potential by unmasking its fusion peptide. Fusion occurs at the host cell plasma membrane. The transmembrane protein (TM) acts as a class I viral fusion protein. Under the current model, the protein has at least 3 conformational states: pre-fusion native state, pre-hairpin intermediate state, and post-fusion hairpin state. During viral and target cell membrane fusion, the coiled coil regions (heptad repeats) assume a trimer-of-hairpins structure, positioning the fusion peptide in close proximity to the C-terminal region of the ectodomain. The formation of this structure appears to drive apposition and subsequent fusion of viral and target cell membranes. Membranes fusion leads to delivery of the nucleocapsid into the cytoplasm. The chain is Envelope glycoprotein gp150 (env) from Feline immunodeficiency virus (strain UK2) (FIV).